The sequence spans 163 residues: Sorting nexin-3 (163 aa).

The PX domain occupies 39–162 (VEVRDPRTHF…VRFLQDEVFN (124 aa)). A 1,2-diacyl-sn-glycero-3-phospho-(1D-myo-inositol-3-phosphate)-binding residues include arginine 82, serine 84, lysine 113, arginine 119, and arginine 128.

This sequence belongs to the sorting nexin family.

It is found in the cytoplasm. It localises to the golgi apparatus membrane. The protein resides in the prevacuolar compartment membrane. Its function is as follows. Required for retention of late Golgi membrane proteins. Component of the retrieval machinery that functions by direct interaction with the cytosolic tails of certain TGN membrane proteins during the sorting/budding process at the prevacuolar compartment. Binds phosphatidylinositol 3-phosphate (PtdIns(P3)). This is Sorting nexin-3 (SNX3) from Eremothecium gossypii (strain ATCC 10895 / CBS 109.51 / FGSC 9923 / NRRL Y-1056) (Yeast).